We begin with the raw amino-acid sequence, 614 residues long: 1-deoxy-D-xylulose-5-phosphate synthase (614 aa).

Residues His74 and 115–117 (AHS) each bind thiamine diphosphate. A Mg(2+)-binding site is contributed by Asp146. Residues 147 to 148 (GA), Asn175, Tyr282, and Glu363 each bind thiamine diphosphate. Asn175 is a binding site for Mg(2+).

This sequence belongs to the transketolase family. DXPS subfamily. As to quaternary structure, homodimer. The cofactor is Mg(2+). Thiamine diphosphate is required as a cofactor.

The enzyme catalyses D-glyceraldehyde 3-phosphate + pyruvate + H(+) = 1-deoxy-D-xylulose 5-phosphate + CO2. The protein operates within metabolic intermediate biosynthesis; 1-deoxy-D-xylulose 5-phosphate biosynthesis; 1-deoxy-D-xylulose 5-phosphate from D-glyceraldehyde 3-phosphate and pyruvate: step 1/1. Functionally, catalyzes the acyloin condensation reaction between C atoms 2 and 3 of pyruvate and glyceraldehyde 3-phosphate to yield 1-deoxy-D-xylulose-5-phosphate (DXP). The sequence is that of 1-deoxy-D-xylulose-5-phosphate synthase from Nitrosospira multiformis (strain ATCC 25196 / NCIMB 11849 / C 71).